The following is a 149-amino-acid chain: Nucleoside diphosphate kinase (149 aa).

6 residues coordinate ATP: lysine 9, phenylalanine 57, arginine 85, threonine 91, arginine 102, and asparagine 112. Histidine 115 acts as the Pros-phosphohistidine intermediate in catalysis.

Belongs to the NDK family. It depends on Mg(2+) as a cofactor.

The protein resides in the cytoplasm. It catalyses the reaction a 2'-deoxyribonucleoside 5'-diphosphate + ATP = a 2'-deoxyribonucleoside 5'-triphosphate + ADP. It carries out the reaction a ribonucleoside 5'-diphosphate + ATP = a ribonucleoside 5'-triphosphate + ADP. In terms of biological role, major role in the synthesis of nucleoside triphosphates other than ATP. The ATP gamma phosphate is transferred to the NDP beta phosphate via a ping-pong mechanism, using a phosphorylated active-site intermediate. The sequence is that of Nucleoside diphosphate kinase from Methanosarcina acetivorans (strain ATCC 35395 / DSM 2834 / JCM 12185 / C2A).